Consider the following 224-residue polypeptide: Toxin coregulated pilin (224 aa).

Residues 1–25 (MQLLKQLFKKKFVKEEHDKKTGQEG) constitute a propeptide, atypical leader sequence. An N-methylmethionine modification is found at Met-26. Residues 26–46 (MTLLEVIIVLGIMGVVSAGVV) traverse the membrane as a helical segment. Cys-145 and Cys-211 are joined by a disulfide.

Its subcellular location is the fimbrium. It is found in the membrane. Functionally, major component of the toxin co-regulated pilus (tcp) which is a type IV pilus essential for bacterial aggregation and subsequent colonization in the host small intestine. The chain is Toxin coregulated pilin (tcpA) from Vibrio cholerae serotype O1 (strain ATCC 39315 / El Tor Inaba N16961).